The following is a 113-amino-acid chain: Photosystem II reaction center Psb28 protein (113 aa).

Belongs to the Psb28 family. Part of the photosystem II complex.

The protein localises to the cellular thylakoid membrane. The protein is Photosystem II reaction center Psb28 protein of Trichodesmium erythraeum (strain IMS101).